Consider the following 126-residue polypeptide: Acidic phospholipase A2 S1E6-b (126 aa).

The signal sequence occupies residues 1–3 (VEG). Intrachain disulfides connect Cys-29/Cys-119, Cys-31/Cys-47, Cys-46/Cys-98, Cys-52/Cys-126, Cys-53/Cys-91, Cys-60/Cys-84, and Cys-78/Cys-89. Residues Tyr-30, Gly-32, and Gly-34 each coordinate Ca(2+). The active site involves His-50. Asp-51 serves as a coordination point for Ca(2+). Asp-92 is a catalytic residue.

In terms of assembly, homodimer. It depends on Ca(2+) as a cofactor. As to expression, expressed by the venom gland.

The protein localises to the secreted. The enzyme catalyses a 1,2-diacyl-sn-glycero-3-phosphocholine + H2O = a 1-acyl-sn-glycero-3-phosphocholine + a fatty acid + H(+). Functionally, snake venom phospholipase that inhibits ADP-induced platelet aggregation. PLA2 catalyzes the calcium-dependent hydrolysis of the 2-acyl groups in 3-sn-phosphoglycerides. This is Acidic phospholipase A2 S1E6-b from Calloselasma rhodostoma (Malayan pit viper).